Consider the following 275-residue polypeptide: Alpha carbonic anhydrase 7 (275 aa).

The first 27 residues, 1–27 (MVNYSSISCIFFVALFSIFTIVSISSA), serve as a signal peptide directing secretion. N-linked (GlcNAc...) asparagine glycans are attached at residues N3 and N96. Positions 38-272 (REFNYKKNDE…TNKRIVHLYR (235 aa)) constitute an Alpha-carbonic anhydrase domain. C63 and C222 are disulfide-bonded. The active-site Proton acceptor is H104. Zn(2+)-binding residues include H130, H132, and H149. 218–219 (TT) contacts substrate. The N-linked (GlcNAc...) asparagine glycan is linked to N225.

Belongs to the alpha-class carbonic anhydrase family. Zn(2+) serves as cofactor. Post-translationally, N-glycosylated.

It is found in the plastid. The protein localises to the chloroplast stroma. It catalyses the reaction hydrogencarbonate + H(+) = CO2 + H2O. Its function is as follows. Reversible hydration of carbon dioxide. In Arabidopsis thaliana (Mouse-ear cress), this protein is Alpha carbonic anhydrase 7 (ACA7).